The chain runs to 104 residues: Co-chaperonin GroES 2 (104 aa).

The protein belongs to the GroES chaperonin family. Heptamer of 7 subunits arranged in a ring. Interacts with the chaperonin GroEL.

The protein resides in the cytoplasm. In terms of biological role, together with the chaperonin GroEL, plays an essential role in assisting protein folding. The GroEL-GroES system forms a nano-cage that allows encapsulation of the non-native substrate proteins and provides a physical environment optimized to promote and accelerate protein folding. GroES binds to the apical surface of the GroEL ring, thereby capping the opening of the GroEL channel. This is Co-chaperonin GroES 2 from Bradyrhizobium diazoefficiens (strain JCM 10833 / BCRC 13528 / IAM 13628 / NBRC 14792 / USDA 110).